A 348-amino-acid polypeptide reads, in one-letter code: Fructose-1,6-bisphosphatase (348 aa).

The Pro/N-degron signature appears at P2–V5. S12 is modified (phosphoserine). AMP is bound by residues I27 to Q31 and T38 to T42. Positions 79 and 108 each coordinate Mg(2+). S122–Y123 is an AMP binding site. The Mg(2+) site is built by D128, I130, and D131. D131–S134 contacts substrate. R150 serves as a coordination point for AMP. Residues N222–N225, R255–M260, Y276, and K286–R288 contribute to the substrate site. Residue E292 coordinates Mg(2+).

The protein belongs to the FBPase class 1 family. In terms of assembly, homotetramer. Requires Mg(2+) as cofactor. Ubiquitinated. Targeted for proteasomal degradation when cells are shifted to glucose-containing growth medium.

It catalyses the reaction beta-D-fructose 1,6-bisphosphate + H2O = beta-D-fructose 6-phosphate + phosphate. It participates in carbohydrate biosynthesis; gluconeogenesis. With respect to regulation, subject to complex allosteric regulation. The enzyme can assume an active R-state, or an inactive T-state. Intermediate conformations may exist. AMP acts as allosteric inhibitor. AMP binding affects the turnover of bound substrate and not the affinity for substrate. The chain is Fructose-1,6-bisphosphatase (FBP1) from Saccharomyces cerevisiae (strain ATCC 204508 / S288c) (Baker's yeast).